A 316-amino-acid chain; its full sequence is C1GALT1-specific chaperone 1 (316 aa).

The Cytoplasmic portion of the chain corresponds to 1-6 (MLSESS). Residues 7-26 (SFLKGVMLGSIFCALITMLG) form a helical; Signal-anchor for type II membrane protein membrane-spanning segment. Over 27–316 (HIRIGNRMHH…FLPPNGSEND (290 aa)) the chain is Lumenal.

Belongs to the glycosyltransferase 31 family. Beta3-Gal-T subfamily. In terms of assembly, associates with core 1 beta-3-galactosyltransferase (C1GALT1), probably not with the soluble active form.

It is found in the membrane. Its function is as follows. Probable chaperone required for the generation of 1 O-glycan Gal-beta1-3GalNAc-alpha1-Ser/Thr (T antigen), which is a precursor for many extended O-glycans in glycoproteins. Probably acts as a specific molecular chaperone assisting the folding/stability of core 1 beta-3-galactosyltransferase (C1GALT1). In Rattus norvegicus (Rat), this protein is C1GALT1-specific chaperone 1 (C1galt1c1).